Consider the following 188-residue polypeptide: Putative ankyrin repeat protein FPV230 (188 aa).

4 ANK repeats span residues 2 to 31 (ENEL…NPNA), 36 to 65 (KYMI…DANV), 135 to 164 (LGST…DINI), and 168 to 187 (NNNT…YLKC).

The chain is Putative ankyrin repeat protein FPV230 from Vertebrata (FPV).